Consider the following 399-residue polypeptide: Glutamyl-tRNA reductase (399 aa).

Residues 45–48 (TCNR), Ser101, 106–108 (EDQ), and Gln112 each bind substrate. Catalysis depends on Cys46, which acts as the Nucleophile. 177–182 (GFGKIG) is an NADP(+) binding site.

It belongs to the glutamyl-tRNA reductase family. In terms of assembly, homodimer.

The enzyme catalyses (S)-4-amino-5-oxopentanoate + tRNA(Glu) + NADP(+) = L-glutamyl-tRNA(Glu) + NADPH + H(+). The protein operates within porphyrin-containing compound metabolism; protoporphyrin-IX biosynthesis; 5-aminolevulinate from L-glutamyl-tRNA(Glu): step 1/2. In terms of biological role, catalyzes the NADPH-dependent reduction of glutamyl-tRNA(Glu) to glutamate 1-semialdehyde (GSA). The sequence is that of Glutamyl-tRNA reductase from Clostridium kluyveri (strain ATCC 8527 / DSM 555 / NBRC 12016 / NCIMB 10680 / K1).